Here is a 292-residue protein sequence, read N- to C-terminus: Acetylglutamate kinase (292 aa).

Substrate contacts are provided by residues 64-65, Arg-86, and Asn-190; that span reads GG.

The protein belongs to the acetylglutamate kinase family. ArgB subfamily.

Its subcellular location is the cytoplasm. It carries out the reaction N-acetyl-L-glutamate + ATP = N-acetyl-L-glutamyl 5-phosphate + ADP. It participates in amino-acid biosynthesis; L-arginine biosynthesis; N(2)-acetyl-L-ornithine from L-glutamate: step 2/4. Catalyzes the ATP-dependent phosphorylation of N-acetyl-L-glutamate. This Geotalea daltonii (strain DSM 22248 / JCM 15807 / FRC-32) (Geobacter daltonii) protein is Acetylglutamate kinase.